We begin with the raw amino-acid sequence, 446 residues long: Argininosuccinate lyase (446 aa).

Belongs to the lyase 1 family. Argininosuccinate lyase subfamily.

Its subcellular location is the cytoplasm. It carries out the reaction 2-(N(omega)-L-arginino)succinate = fumarate + L-arginine. Its pathway is amino-acid biosynthesis; L-arginine biosynthesis; L-arginine from L-ornithine and carbamoyl phosphate: step 3/3. The sequence is that of Argininosuccinate lyase from Phocaeicola vulgatus (strain ATCC 8482 / DSM 1447 / JCM 5826 / CCUG 4940 / NBRC 14291 / NCTC 11154) (Bacteroides vulgatus).